A 142-amino-acid polypeptide reads, in one-letter code: Large ribosomal subunit protein uL11 (142 aa).

Belongs to the universal ribosomal protein uL11 family. In terms of assembly, part of the ribosomal stalk of the 50S ribosomal subunit. Interacts with L10 and the large rRNA to form the base of the stalk. L10 forms an elongated spine to which L12 dimers bind in a sequential fashion forming a multimeric L10(L12)X complex. In terms of processing, one or more lysine residues are methylated.

Functionally, forms part of the ribosomal stalk which helps the ribosome interact with GTP-bound translation factors. The protein is Large ribosomal subunit protein uL11 of Mycolicibacterium vanbaalenii (strain DSM 7251 / JCM 13017 / BCRC 16820 / KCTC 9966 / NRRL B-24157 / PYR-1) (Mycobacterium vanbaalenii).